An 875-amino-acid polypeptide reads, in one-letter code: Alanine--tRNA ligase (875 aa).

4 residues coordinate Zn(2+): His-567, His-571, Cys-669, and His-673.

The protein belongs to the class-II aminoacyl-tRNA synthetase family. The cofactor is Zn(2+).

It is found in the cytoplasm. The catalysed reaction is tRNA(Ala) + L-alanine + ATP = L-alanyl-tRNA(Ala) + AMP + diphosphate. Its function is as follows. Catalyzes the attachment of alanine to tRNA(Ala) in a two-step reaction: alanine is first activated by ATP to form Ala-AMP and then transferred to the acceptor end of tRNA(Ala). Also edits incorrectly charged Ser-tRNA(Ala) and Gly-tRNA(Ala) via its editing domain. This is Alanine--tRNA ligase from Geobacter sulfurreducens (strain ATCC 51573 / DSM 12127 / PCA).